A 795-amino-acid chain; its full sequence is Endoplasmin (795 aa).

The N-terminal stretch at M1–A21 is a signal peptide. The SRT pseudosubstrate motif signature appears at S41–T43. N-linked (GlcNAc...) asparagine glycosylation is found at N61 and N106. Positions 106, 148, 161, and 198 each coordinate ATP. N216 carries N-linked (GlcNAc...) asparagine glycosylation. A compositionally biased stretch (acidic residues) spans E289 to E316. Residues E289–T322 are disordered. 3 N-linked (GlcNAc...) asparagine glycosylation sites follow: N444, N480, and N501. Residues D751–L795 are disordered. Acidic residues predominate over residues E756–S782. Over residues E783–L795 the composition is skewed to basic and acidic residues. Residues K792–L795 carry the Prevents secretion from ER motif.

Belongs to the heat shock protein 90 family. As to quaternary structure, homodimer; disulfide-linked.

It localises to the endoplasmic reticulum lumen. The protein localises to the sarcoplasmic reticulum lumen. The catalysed reaction is ATP + H2O = ADP + phosphate + H(+). Its function is as follows. ATP-dependent chaperone involved in the processing of proteins in the endoplasmic reticulum, regulating their transport. This chain is Endoplasmin (HSP90B1), found in Gallus gallus (Chicken).